The chain runs to 317 residues: Small ribosomal subunit protein uS2 (317 aa).

Disordered regions lie at residues 1 to 30 (MENE…ASKE) and 293 to 317 (RSFE…EVAE). Residues 18 to 30 (MAEKADDSKASKE) are compositionally biased toward basic and acidic residues. Residues 308–317 (KTTTSTEVAE) are compositionally biased toward low complexity.

Belongs to the universal ribosomal protein uS2 family.

In Mycoplasmopsis agalactiae (strain NCTC 10123 / CIP 59.7 / PG2) (Mycoplasma agalactiae), this protein is Small ribosomal subunit protein uS2.